Consider the following 258-residue polypeptide: Glucanase inhibitor protein 1 (258 aa).

The first 19 residues, 1-19 (MRVVPTLAAASLALGAVAG), serve as a signal peptide directing secretion. Residues 27 to 254 (ILGGGEVPIG…AIEWITSVTK (228 aa)) form the Peptidase S1 domain. Residues C54 and C70 are joined by a disulfide bond. N-linked (GlcNAc...) asparagine glycosylation is found at N87, N102, N107, N157, and N185. 2 cysteine pairs are disulfide-bonded: C177-C189 and C199-C230.

Belongs to the peptidase S1 family. In terms of assembly, forms an apoplastic complex with host endoglucanases in tomato leaves during P.infestans infection.

Its subcellular location is the secreted. Functionally, secreted effector that suppresses host plant glucan elicitor-mediated defense responses. Targets host endoglucanases and inhibits the endoglucanase-mediated release of elicitor-active glucan oligosaccharides from P.infestans cell walls. In Phytophthora infestans (Potato late blight agent), this protein is Glucanase inhibitor protein 1.